The following is a 375-amino-acid chain: Protein arginine N-methyltransferase 6 (375 aa).

Positions 1–36 (MSQPKRRKLESGGGGEGGEGTEEEDGGELEVAVPRP) are disordered. Over residues 19–28 (EGTEEEDGGE) the composition is skewed to acidic residues. Thr-21 carries the phosphothreonine modification. Residue Arg-38 is modified to Asymmetric dimethylarginine; by autocatalysis. Residues 44–374 (DQLYYQCYSD…EEKTKDFAME (331 aa)) enclose the SAM-dependent MTase PRMT-type domain. His-57, Arg-66, Gly-90, Glu-112, and Glu-141 together coordinate S-adenosyl-L-methionine. Active-site residues include Glu-155 and Glu-164.

The protein belongs to the class I-like SAM-binding methyltransferase superfamily. Protein arginine N-methyltransferase family. PRMT6 subfamily. Interacts with (and methylates) HIV-1 Tat, Rev and Nucleocapsid protein p7 (NC). Interacts with EPB41L3 and NCOA1. In terms of processing, automethylation enhances its stability.

It localises to the nucleus. The catalysed reaction is L-arginyl-[protein] + 2 S-adenosyl-L-methionine = N(omega),N(omega)-dimethyl-L-arginyl-[protein] + 2 S-adenosyl-L-homocysteine + 2 H(+). Arginine methyltransferase that can catalyze the formation of both omega-N monomethylarginine (MMA) and asymmetrical dimethylarginine (aDMA), with a strong preference for the formation of aDMA. Preferentially methylates arginyl residues present in a glycine and arginine-rich domain and displays preference for monomethylated substrates. Specifically mediates the asymmetric dimethylation of histone H3 'Arg-2' to form H3R2me2a. H3R2me2a represents a specific tag for epigenetic transcriptional repression and is mutually exclusive with methylation on histone H3 'Lys-4' (H3K4me2 and H3K4me3). Acts as a transcriptional repressor of various genes such as HOXA2, THBS1 and TP53. Repression of TP53 blocks cellular senescence. Also methylates histone H2A and H4 'Arg-3' (H2AR3me and H4R3me, respectively). Acts as a regulator of DNA base excision during DNA repair by mediating the methylation of DNA polymerase beta (POLB), leading to the stimulation of its polymerase activity by enhancing DNA binding and processivity. Methylates HMGA1. Regulates alternative splicing events. Acts as a transcriptional coactivator of a number of steroid hormone receptors including ESR1, ESR2, PGR and NR3C1. Promotes fasting-induced transcriptional activation of the gluconeogenic program through methylation of the CRTC2 transcription coactivator. Methylates GPS2, protecting GPS2 from ubiquitination and degradation. Methylates SIRT7, inhibiting SIRT7 histone deacetylase activity and promoting mitochondria biogenesis. The chain is Protein arginine N-methyltransferase 6 (PRMT6) from Bos taurus (Bovine).